Here is an 849-residue protein sequence, read N- to C-terminus: Aminopeptidase N (849 aa).

Substrate-binding positions include glutamate 122 and 259-263 (GAMEN). Zn(2+) is bound at residue histidine 294. Glutamate 295 functions as the Proton acceptor in the catalytic mechanism. Zn(2+)-binding residues include histidine 298 and glutamate 317.

It belongs to the peptidase M1 family. Monomer. Requires Zn(2+) as cofactor.

The protein localises to the cytoplasm. The enzyme catalyses Release of an N-terminal amino acid, Xaa-|-Yaa- from a peptide, amide or arylamide. Xaa is preferably Ala, but may be most amino acids including Pro (slow action). When a terminal hydrophobic residue is followed by a prolyl residue, the two may be released as an intact Xaa-Pro dipeptide.. Its function is as follows. Aminopeptidase with broad substrate specificity to several peptides. It has more affinity for oligopeptides than for dipeptides. It plays an essential role in the metabolism, it may be involved in nitrogen supply or protein turnover. This Lactococcus lactis subsp. lactis (Streptococcus lactis) protein is Aminopeptidase N (pepN).